Consider the following 722-residue polypeptide: Ataxin-7-like protein 2 (722 aa).

Disordered stretches follow at residues 106 to 228 (LSKL…PPKT), 288 to 317 (NSRKGESPKEKSPGRKEQVLERPSQELPSS), 347 to 403 (SRAS…DCHY), and 531 to 600 (AITS…GCRG). The segment covering 181-191 (GKPPMAPPSKE) has biased composition (pro residues). The 68-residue stretch at 230 to 297 (RKMARKECDL…NSRKGESPKE (68 aa)) folds into the SCA7 domain. The span at 290–311 (RKGESPKEKSPGRKEQVLERPS) shows a compositional bias: basic and acidic residues. Positions 541-556 (PSPSFSKLPPSKASKS) are enriched in low complexity. Basic and acidic residues predominate over residues 558-569 (KGKDGVEVEAPS). S575 is modified (phosphoserine).

This chain is Ataxin-7-like protein 2 (ATXN7L2), found in Homo sapiens (Human).